A 474-amino-acid chain; its full sequence is Carbohydrate sulfotransferase 3 (474 aa).

Residues 1 to 19 (MEKGLALPQDCRDLVHNLK) lie on the Cytoplasmic side of the membrane. A helical; Signal-anchor for type II membrane protein transmembrane segment spans residues 20-38 (IRGRYVLFLAFVVIVFIFI). The Lumenal segment spans residues 39 to 474 (EKENKIISRV…LEERGTFWVT (436 aa)). N-linked (GlcNAc...) asparagine glycosylation is found at Asn-63, Asn-74, and Asn-96. 137 to 143 (TRTGSSF) provides a ligand contact to 3'-phosphoadenylyl sulfate. Asn-252 carries N-linked (GlcNAc...) asparagine glycosylation. 3'-phosphoadenylyl sulfate is bound at residue 297–305 (RDPRAVLAS). N-linked (GlcNAc...) asparagine glycosylation is found at Asn-415 and Asn-459.

This sequence belongs to the sulfotransferase 1 family. Gal/GlcNAc/GalNAc subfamily. Post-translationally, N-glycosylated.

The protein localises to the golgi apparatus membrane. The enzyme catalyses chondroitin beta-D-glucuronate + n 3'-phosphoadenylyl sulfate = chondroitin 6'-sulfate + n adenosine 3',5'-bisphosphate + n H(+). The catalysed reaction is 3'-phosphoadenylyl sulfate + keratan = adenosine 3',5'-bisphosphate + keratan 6'-sulfate.. Its function is as follows. Sulfotransferase that utilizes 3'-phospho-5'-adenylyl sulfate (PAPS) as sulfonate donor to catalyze the transfer of sulfate to position 6 of the N-acetylgalactosamine (GalNAc) residue of chondroitin. Chondroitin sulfate constitutes the predominant proteoglycan present in cartilage and is distributed on the surfaces of many cells and extracellular matrices. Catalyzes with a lower efficiency the sulfation of Gal residues of keratan sulfate, another glycosaminoglycan. Can also catalyze the sulfation of the Gal residues in sialyl N-acetyllactosamine (sialyl LacNAc) oligosaccharides. May play a role in the maintenance of naive T-lymphocytes in the spleen. The chain is Carbohydrate sulfotransferase 3 (Chst3) from Rattus norvegicus (Rat).